Here is a 341-residue protein sequence, read N- to C-terminus: MTERFVTPDFSSEEDRLEASLRPRVLTEYIGQSKAKGNLQVFIDAARGRQESLDHVLFYGPPGLGKTTLANIVASEMGVSIKSTSGPVIEKPGDLAAILTNLSDGDVLFIDEIHRLSPVVEEILYPAMEDYQLDIIIGQGPSARTIKLDIPRFTLVGATTRAGLLSSPLRDRFGVICRLEFYTDDELATIAGRSARILDIPIEKDGQYEIARRSRGTPRIANRLLRRVRDFAQVKGDGIITRDIADMALSRLEVDNCGLDHMDRLLLLAIIDKFAGGPVGLETLAAAVGEEKDTIEDVIEPYLLQNGFLNRTPRGRTATERAYRHFQRQIPRGKTSGELFS.

Residues 1–182 (MTERFVTPDF…FGVICRLEFY (182 aa)) form a large ATPase domain (RuvB-L) region. Residues leucine 21, arginine 22, glycine 63, lysine 66, threonine 67, threonine 68, 129 to 131 (EDY), arginine 172, tyrosine 182, and arginine 219 contribute to the ATP site. Mg(2+) is bound at residue threonine 67. Residues 183–253 (TDDELATIAG…IADMALSRLE (71 aa)) are small ATPAse domain (RuvB-S). The head domain (RuvB-H) stretch occupies residues 256–341 (NCGLDHMDRL…RGKTSGELFS (86 aa)). Residues arginine 311 and arginine 316 each contribute to the DNA site.

Belongs to the RuvB family. Homohexamer. Forms an RuvA(8)-RuvB(12)-Holliday junction (HJ) complex. HJ DNA is sandwiched between 2 RuvA tetramers; dsDNA enters through RuvA and exits via RuvB. An RuvB hexamer assembles on each DNA strand where it exits the tetramer. Each RuvB hexamer is contacted by two RuvA subunits (via domain III) on 2 adjacent RuvB subunits; this complex drives branch migration. In the full resolvosome a probable DNA-RuvA(4)-RuvB(12)-RuvC(2) complex forms which resolves the HJ.

The protein localises to the cytoplasm. The catalysed reaction is ATP + H2O = ADP + phosphate + H(+). The RuvA-RuvB-RuvC complex processes Holliday junction (HJ) DNA during genetic recombination and DNA repair, while the RuvA-RuvB complex plays an important role in the rescue of blocked DNA replication forks via replication fork reversal (RFR). RuvA specifically binds to HJ cruciform DNA, conferring on it an open structure. The RuvB hexamer acts as an ATP-dependent pump, pulling dsDNA into and through the RuvAB complex. RuvB forms 2 homohexamers on either side of HJ DNA bound by 1 or 2 RuvA tetramers; 4 subunits per hexamer contact DNA at a time. Coordinated motions by a converter formed by DNA-disengaged RuvB subunits stimulates ATP hydrolysis and nucleotide exchange. Immobilization of the converter enables RuvB to convert the ATP-contained energy into a lever motion, pulling 2 nucleotides of DNA out of the RuvA tetramer per ATP hydrolyzed, thus driving DNA branch migration. The RuvB motors rotate together with the DNA substrate, which together with the progressing nucleotide cycle form the mechanistic basis for DNA recombination by continuous HJ branch migration. Branch migration allows RuvC to scan DNA until it finds its consensus sequence, where it cleaves and resolves cruciform DNA. The sequence is that of Holliday junction branch migration complex subunit RuvB from Syntrophotalea carbinolica (strain DSM 2380 / NBRC 103641 / GraBd1) (Pelobacter carbinolicus).